The chain runs to 647 residues: Threonine--tRNA ligase (647 aa).

Residues 1 to 61 (MIKITFPDGA…EEDGSIEIVT (61 aa)) enclose the TGS domain. The tract at residues 240 to 538 (DHRKLGKELD…LIETYKGAFP (299 aa)) is catalytic. Zn(2+) contacts are provided by Cys334, His385, and His515.

It belongs to the class-II aminoacyl-tRNA synthetase family. In terms of assembly, homodimer. Requires Zn(2+) as cofactor.

Its subcellular location is the cytoplasm. The enzyme catalyses tRNA(Thr) + L-threonine + ATP = L-threonyl-tRNA(Thr) + AMP + diphosphate + H(+). Its function is as follows. Catalyzes the attachment of threonine to tRNA(Thr) in a two-step reaction: L-threonine is first activated by ATP to form Thr-AMP and then transferred to the acceptor end of tRNA(Thr). Also edits incorrectly charged L-seryl-tRNA(Thr). This chain is Threonine--tRNA ligase, found in Streptococcus agalactiae serotype III (strain NEM316).